A 475-amino-acid polypeptide reads, in one-letter code: tRNA modification GTPase MnmE (475 aa).

(6S)-5-formyl-5,6,7,8-tetrahydrofolate-binding residues include R24, E81, and K124. The 178-residue stretch at 220-397 (GLSVVLAGQP…LRKELLRLVG (178 aa)) folds into the TrmE-type G domain. K(+) is bound at residue N230. GTP-binding positions include 230–235 (NVGKSS), 249–255 (TPIAGTT), 274–277 (DTAG), and 378–380 (SAR). S234 is a binding site for Mg(2+). Residues T249, I251, and T254 each contribute to the K(+) site. Position 255 (T255) interacts with Mg(2+). A (6S)-5-formyl-5,6,7,8-tetrahydrofolate-binding site is contributed by K475.

The protein belongs to the TRAFAC class TrmE-Era-EngA-EngB-Septin-like GTPase superfamily. TrmE GTPase family. As to quaternary structure, homodimer. Heterotetramer of two MnmE and two MnmG subunits. The cofactor is K(+).

It localises to the cytoplasm. Functionally, exhibits a very high intrinsic GTPase hydrolysis rate. Involved in the addition of a carboxymethylaminomethyl (cmnm) group at the wobble position (U34) of certain tRNAs, forming tRNA-cmnm(5)s(2)U34. In Cupriavidus pinatubonensis (strain JMP 134 / LMG 1197) (Cupriavidus necator (strain JMP 134)), this protein is tRNA modification GTPase MnmE.